Consider the following 892-residue polypeptide: Leucine--tRNA ligase (892 aa).

Residues 42 to 52 (PYPSGKLHMGH) carry the 'HIGH' region motif. The 'KMSKS' region motif lies at 640 to 644 (TMSKS). Lys-643 contacts ATP.

This sequence belongs to the class-I aminoacyl-tRNA synthetase family.

The protein resides in the cytoplasm. It carries out the reaction tRNA(Leu) + L-leucine + ATP = L-leucyl-tRNA(Leu) + AMP + diphosphate. The chain is Leucine--tRNA ligase from Albidiferax ferrireducens (strain ATCC BAA-621 / DSM 15236 / T118) (Rhodoferax ferrireducens).